The chain runs to 424 residues: Na(+), Li(+), K(+)/H(+) antiporter (424 aa).

The next 12 membrane-spanning stretches (helical) occupy residues 15–35 (VGEF…AIYF), 42–62 (GLAG…NLFG), 74–94 (MLVS…LANS), 105–125 (VAFT…QAMI), 141–161 (FYTT…VLFF), 165–185 (FELL…LRFY), 227–247 (LLFV…DLVI), 274–294 (TSFG…TVVI), 305–325 (WVFF…PMTS), 327–347 (FWIF…VVGL), 367–389 (AASL…TAWF), and 393–415 (WTFI…MFHL).

The protein belongs to the major facilitator superfamily.

The protein resides in the cell membrane. Norfloxacin transport is inhibited by CCCP. In terms of biological role, exhibits dual functions as a Na(+)(Li(+)/K(+))/H(+) antiporter and a multidrug efflux pump. Catalyzes the efflux of Na(+), Li(+) and K(+) in exchange for external protons. Shows a preference for Na(+), followed by K(+) and Li(+). Can also function as a multidrug efflux pump. Transports ethidium bromide and norfloxacin. This chain is Na(+), Li(+), K(+)/H(+) antiporter, found in Planococcus maritimus.